We begin with the raw amino-acid sequence, 802 residues long: Nuclear polyadenylated RNA-binding protein 3 (802 aa).

2 disordered regions span residues 1 to 174 (MSDE…RRET) and 252 to 293 (ALSV…RMRF). Low complexity predominate over residues 22–34 (SNSNENELMNNSS). Residues 37-73 (DGIEFDAPEEEREAEREEENEEQHELEDVNDEEEEDK) show a composition bias toward acidic residues. Thr86 bears the Phosphothreonine mark. Acidic residues-rich tracts occupy residues 101–139 (DDDD…EEGN) and 149–158 (AAEDGEDEED). Over residues 159-174 (KKDKTKDKEVELRRET) the composition is skewed to basic and acidic residues. The segment covering 260 to 276 (STISTTASASATSGARS) has biased composition (low complexity). Residues 277-293 (NDQRKPPLSDAQRRMRF) show a composition bias toward basic and acidic residues. Residues 330 to 401 (SRLFIGNLPL…KKLILEVSSS (72 aa)) enclose the RRM domain. Phosphothreonine is present on Thr451. Disordered regions lie at residues 571–675 (IYGA…PMDQ) and 717–802 (MQGQ…KLQK). Over residues 575–590 (PPLPVPNGPAVGPPPQ) the composition is skewed to pro residues. Residues 593–614 (YYQGYSMPPPQQQQQQPYGNYG) are compositionally biased toward low complexity. Positions 632-642 (MNQSYGRYQTS) are enriched in polar residues. Low complexity-rich tracts occupy residues 651 to 661 (QIPQGYGRYQA) and 717 to 738 (MQGQ…MNSS). Residues 745–754 (TNYNGQNISA) are compositionally biased toward polar residues. A compositionally biased stretch (pro residues) spans 757–769 (SAPPMSHQPPPPQ). A compositionally biased stretch (low complexity) spans 770 to 785 (QQQQQQQQQQQQQQQP).

The protein resides in the nucleus. The protein localises to the nucleoplasm. In terms of biological role, may be required for packaging pre-mRNAs into ribonucleoprotein structures amenable to efficient nuclear RNA processing. Binds to poly(A)+ RNA. Appears to act in the maintenance of CLN3 mRNA levels. In Saccharomyces cerevisiae (strain ATCC 204508 / S288c) (Baker's yeast), this protein is Nuclear polyadenylated RNA-binding protein 3 (NAB3).